Consider the following 259-residue polypeptide: Imidazole glycerol phosphate synthase subunit HisF (259 aa).

Active-site residues include Asp11 and Asp130.

The protein belongs to the HisA/HisF family. As to quaternary structure, heterodimer of HisH and HisF.

Its subcellular location is the cytoplasm. The enzyme catalyses 5-[(5-phospho-1-deoxy-D-ribulos-1-ylimino)methylamino]-1-(5-phospho-beta-D-ribosyl)imidazole-4-carboxamide + L-glutamine = D-erythro-1-(imidazol-4-yl)glycerol 3-phosphate + 5-amino-1-(5-phospho-beta-D-ribosyl)imidazole-4-carboxamide + L-glutamate + H(+). The protein operates within amino-acid biosynthesis; L-histidine biosynthesis; L-histidine from 5-phospho-alpha-D-ribose 1-diphosphate: step 5/9. IGPS catalyzes the conversion of PRFAR and glutamine to IGP, AICAR and glutamate. The HisF subunit catalyzes the cyclization activity that produces IGP and AICAR from PRFAR using the ammonia provided by the HisH subunit. The sequence is that of Imidazole glycerol phosphate synthase subunit HisF from Variovorax paradoxus (strain S110).